Consider the following 320-residue polypeptide: Malate dehydrogenase (320 aa).

NAD(+)-binding positions include 10–15 and aspartate 34; that span reads GAGNIG. Substrate contacts are provided by arginine 83 and arginine 89. Residues asparagine 96 and 119–121 contribute to the NAD(+) site; that span reads ITN. Substrate is bound by residues asparagine 121 and arginine 152. Histidine 176 serves as the catalytic Proton acceptor.

This sequence belongs to the LDH/MDH superfamily. MDH type 3 family.

It carries out the reaction (S)-malate + NAD(+) = oxaloacetate + NADH + H(+). In terms of biological role, catalyzes the reversible oxidation of malate to oxaloacetate. The polypeptide is Malate dehydrogenase (Rhizorhabdus wittichii (strain DSM 6014 / CCUG 31198 / JCM 15750 / NBRC 105917 / EY 4224 / RW1) (Sphingomonas wittichii)).